The sequence spans 801 residues: Phenylalanine--tRNA ligase beta subunit (801 aa).

The region spanning 39–153 (ADGLSKLVVG…EEAVPGDAIF (115 aa)) is the tRNA-binding domain. One can recognise a B5 domain in the interval 406–481 (TEPVEVSTSL…RIYGYDKLPT (76 aa)). Residues D459, D465, E468, and E469 each coordinate Mg(2+). The FDX-ACB domain occupies 708–801 (TKFPAMTRDV…LTEQVGAEVR (94 aa)).

Belongs to the phenylalanyl-tRNA synthetase beta subunit family. Type 1 subfamily. In terms of assembly, tetramer of two alpha and two beta subunits. The cofactor is Mg(2+).

Its subcellular location is the cytoplasm. It carries out the reaction tRNA(Phe) + L-phenylalanine + ATP = L-phenylalanyl-tRNA(Phe) + AMP + diphosphate + H(+). The chain is Phenylalanine--tRNA ligase beta subunit from Streptococcus pyogenes serotype M1.